We begin with the raw amino-acid sequence, 188 residues long: ATP synthase subunit b (188 aa).

The helical transmembrane segment at 24 to 44 threads the bilayer; sequence LPASYDIVWSLVVFIIVLILF.

This sequence belongs to the ATPase B chain family. F-type ATPases have 2 components, F(1) - the catalytic core - and F(0) - the membrane proton channel. F(1) has five subunits: alpha(3), beta(3), gamma(1), delta(1), epsilon(1). F(0) has three main subunits: a(1), b(2) and c(10-14). The alpha and beta chains form an alternating ring which encloses part of the gamma chain. F(1) is attached to F(0) by a central stalk formed by the gamma and epsilon chains, while a peripheral stalk is formed by the delta and b chains.

It localises to the cell membrane. F(1)F(0) ATP synthase produces ATP from ADP in the presence of a proton or sodium gradient. F-type ATPases consist of two structural domains, F(1) containing the extramembraneous catalytic core and F(0) containing the membrane proton channel, linked together by a central stalk and a peripheral stalk. During catalysis, ATP synthesis in the catalytic domain of F(1) is coupled via a rotary mechanism of the central stalk subunits to proton translocation. In terms of biological role, component of the F(0) channel, it forms part of the peripheral stalk, linking F(1) to F(0). The chain is ATP synthase subunit b from Corynebacterium diphtheriae (strain ATCC 700971 / NCTC 13129 / Biotype gravis).